Consider the following 343-residue polypeptide: UDP-3-O-(3-hydroxymyristoyl)glucosamine N-acyltransferase (343 aa).

The active-site Proton acceptor is histidine 239.

Belongs to the transferase hexapeptide repeat family. LpxD subfamily. In terms of assembly, homotrimer.

It catalyses the reaction a UDP-3-O-[(3R)-3-hydroxyacyl]-alpha-D-glucosamine + a (3R)-hydroxyacyl-[ACP] = a UDP-2-N,3-O-bis[(3R)-3-hydroxyacyl]-alpha-D-glucosamine + holo-[ACP] + H(+). The enzyme catalyses UDP-3-O-[(3R)-3-hydroxytetradecanoyl]-alpha-D-glucosamine + (3R)-hydroxytetradecanoyl-[ACP] = UDP-2-N,3-O-bis[(3R)-3-hydroxytetradecanoyl]-alpha-D-glucosamine + holo-[ACP] + H(+). Its pathway is glycolipid biosynthesis; lipid IV(A) biosynthesis; lipid IV(A) from (3R)-3-hydroxytetradecanoyl-[acyl-carrier-protein] and UDP-N-acetyl-alpha-D-glucosamine: step 3/6. Its function is as follows. Catalyzes the N-acylation of UDP-3-O-(hydroxytetradecanoyl)glucosamine using 3-hydroxytetradecanoyl-ACP as the acyl donor. Is involved in the biosynthesis of lipid A, a phosphorylated glycolipid that anchors the lipopolysaccharide to the outer membrane of the cell. The chain is UDP-3-O-(3-hydroxymyristoyl)glucosamine N-acyltransferase from Blochmanniella pennsylvanica (strain BPEN).